The following is a 93-amino-acid chain: Small ribosomal subunit protein bS18 (93 aa).

Belongs to the bacterial ribosomal protein bS18 family. In terms of assembly, part of the 30S ribosomal subunit. Forms a tight heterodimer with protein bS6.

Its function is as follows. Binds as a heterodimer with protein bS6 to the central domain of the 16S rRNA, where it helps stabilize the platform of the 30S subunit. This chain is Small ribosomal subunit protein bS18, found in Variovorax paradoxus (strain S110).